Here is a 338-residue protein sequence, read N- to C-terminus: GTPase Obg (338 aa).

The Obg domain occupies 1 to 159 (MKFIDEVTLF…AKLRLELKLM (159 aa)). An OBG-type G domain is found at 160-331 (ADVGLLGLPN…LLDEIARRLW (172 aa)). Residues 166–173 (GLPNAGKS), 191–195 (FTTIK), 213–216 (DIPG), 283–286 (TKLD), and 312–314 (SSA) contribute to the GTP site. The Mg(2+) site is built by Ser173 and Thr193.

Belongs to the TRAFAC class OBG-HflX-like GTPase superfamily. OBG GTPase family. Monomer. Mg(2+) serves as cofactor.

Its subcellular location is the cytoplasm. An essential GTPase which binds GTP, GDP and possibly (p)ppGpp with moderate affinity, with high nucleotide exchange rates and a fairly low GTP hydrolysis rate. Plays a role in control of the cell cycle, stress response, ribosome biogenesis and in those bacteria that undergo differentiation, in morphogenesis control. This Pelobacter propionicus (strain DSM 2379 / NBRC 103807 / OttBd1) protein is GTPase Obg.